Consider the following 465-residue polypeptide: Mothers against decapentaplegic homolog 5 (465 aa).

Position 2 is an N-acetylthreonine (T2). The 125-residue stretch at 13–137 (PAVKRLLGWK…YKRVESPVLP (125 aa)) folds into the MH1 domain. Positions 65, 110, 122, and 127 each coordinate Zn(2+). The tract at residues 163–243 (NEPHMPQNAT…GQDNSQPMDT (81 aa)) is disordered. A compositionally biased stretch (polar residues) spans 169 to 182 (QNATFPDSFHQPNS). Over residues 186–197 (PLSPNSPYPPSP) the composition is skewed to pro residues. Low complexity predominate over residues 198–214 (ASSTYPNSPASSGPGSP). Over residues 234–243 (GQDNSQPMDT) the composition is skewed to polar residues. In terms of domain architecture, MH2 spans 271 to 465 (WCSIVYYELN…SPLNPISSVS (195 aa)). Phosphoserine occurs at positions 463 and 465.

This sequence belongs to the dwarfin/SMAD family. In terms of assembly, homodimer. Forms trimers with the co-SMAD SMAD4. Interacts with PEBP2-alpha subunit and SMURF1. Interacts with SUV39H1 and SUV39H2. Interacts (via MH2 domain) with LEMD3. Interacts with WWP1. Interacts with TMEM119. Interacts with ZNF8. Interacts with RANBP3L. Interacts with HK1. Interacts with HGS; this interaction attenuates BMP signaling. Post-translationally, phosphorylated on serine by BMP (bone morphogenetic proteins) type 1 receptor kinase. In terms of processing, ubiquitin-mediated proteolysis by SMAD-specific E3 ubiquitin ligase SMURF1.

It is found in the cytoplasm. It localises to the nucleus. The protein localises to the mitochondrion. In terms of biological role, transcriptional regulator that plays a role in various cellular processes including embryonic development, cell differentiation, angiogenesis and tissue homeostasis. Upon BMP ligand binding to their receptors at the cell surface, is phosphorylated by activated type I BMP receptors (BMPRIs) and associates with SMAD4 to form a heteromeric complex which translocates into the nucleus acting as transcription factor. In turn, the hetero-trimeric complex recognizes cis-regulatory elements containing Smad Binding Elements (SBEs) to modulate the outcome of the signaling network. Non-phosphorylated SMAD5 has a cytoplasmic role in energy metabolism regulation by promoting mitochondrial respiration and glycolysis in response to cytoplasmic pH changes. Mechanistically, interacts with hexokinase 1/HK1 and thereby accelerates glycolysis. In Rattus norvegicus (Rat), this protein is Mothers against decapentaplegic homolog 5 (Smad5).